The primary structure comprises 97 residues: Co-chaperonin GroES (97 aa).

Belongs to the GroES chaperonin family. Heptamer of 7 subunits arranged in a ring. Interacts with the chaperonin GroEL.

It localises to the cytoplasm. Together with the chaperonin GroEL, plays an essential role in assisting protein folding. The GroEL-GroES system forms a nano-cage that allows encapsulation of the non-native substrate proteins and provides a physical environment optimized to promote and accelerate protein folding. GroES binds to the apical surface of the GroEL ring, thereby capping the opening of the GroEL channel. The protein is Co-chaperonin GroES of Photorhabdus laumondii subsp. laumondii (strain DSM 15139 / CIP 105565 / TT01) (Photorhabdus luminescens subsp. laumondii).